A 429-amino-acid polypeptide reads, in one-letter code: Esterase/beta-lactamase LipL (429 aa).

S88 serves as the catalytic Acyl-ester intermediate.

The protein belongs to the beta-lactamase family.

The protein localises to the secreted. It localises to the cell wall. The protein resides in the cell membrane. It carries out the reaction a fatty acid ester + H2O = an aliphatic alcohol + a fatty acid + H(+). It catalyses the reaction an acetyl ester + H2O = an aliphatic alcohol + acetate + H(+). The enzyme catalyses a butanoate ester + H2O = an aliphatic alcohol + butanoate + H(+). The catalysed reaction is an octanoate ester + H2O = an aliphatic alcohol + octanoate + H(+). It carries out the reaction decanoate ester + H2O = decanoate + an aliphatic alcohol + H(+). It catalyses the reaction a dodecanoate ester + H2O = an aliphatic alcohol + dodecanoate + H(+). The enzyme catalyses a tetradecanoate ester + H2O = an aliphatic alcohol + tetradecanoate + H(+). The catalysed reaction is hexadecanoate ester + H2O = an aliphatic alcohol + hexadecanoate + H(+). It carries out the reaction octadecanoate ester + H2O = an aliphatic alcohol + octadecanoate + H(+). It catalyses the reaction a hexanoate ester + H2O = an aliphatic alcohol + hexanoate + H(+). The enzyme catalyses a beta-lactam + H2O = a substituted beta-amino acid. With respect to regulation, esterase and beta-lactamase activities are inhibited by the active site residue modifiers phenylmethanesulfonylflouride (PMSF) and diethylpyrocarbonate (DEPC). Functionally, shows both esterase and beta-lactamase activities, with a much higher activity against phenyl esters than against beta-lactams. Shows esterase activity against both long-chain and short-chain p-nitrophenol (pNP) esters, with a preference for shorter chain esters. Hydrolyzes substrates containing beta-lactam ring such as nitrocefin and ampicillin. Functions as an immunogen that activates both humoral and cell-mediated responses. In Mycobacterium tuberculosis (strain ATCC 25618 / H37Rv), this protein is Esterase/beta-lactamase LipL.